The chain runs to 233 residues: MSKRQDYIVAWMEVRGKRFEILVRPELAFRYKEKGDVDLEDVLWTDTIYRDVRKGLKASPEEVKKAFGTSDPRRVAEKILKEGEIQLTEEQRRRLLEAKRRQIISYIARNAIDPTTGRPIPEARIEAALEEVRFPINLWRDAESQAVEAVRLIARVMPIRLARALLEVKIPPPHSGRAYQALMRMGEVKKADWLPDGSLKAELEIPAGAQVEVTSRIQALARGAAEVKVKKVA.

It belongs to the SDO1/SBDS family.

This chain is Ribosome maturation protein SDO1 homolog, found in Aeropyrum pernix (strain ATCC 700893 / DSM 11879 / JCM 9820 / NBRC 100138 / K1).